Here is a 212-residue protein sequence, read N- to C-terminus: Probable GTP-binding protein EngB (212 aa).

The region spanning 38–210 (SLPEIAFVGK…KASLAKCIKP (173 aa)) is the EngB-type G domain. GTP contacts are provided by residues 46-53 (GKSNVGKS), 73-77 (GRTRQ), 91-94 (DLPG), 158-161 (TKSD), and 189-191 (VSS). Positions 53 and 75 each coordinate Mg(2+).

This sequence belongs to the TRAFAC class TrmE-Era-EngA-EngB-Septin-like GTPase superfamily. EngB GTPase family. Mg(2+) is required as a cofactor.

In terms of biological role, necessary for normal cell division and for the maintenance of normal septation. This is Probable GTP-binding protein EngB from Rickettsia felis (strain ATCC VR-1525 / URRWXCal2) (Rickettsia azadi).